The sequence spans 420 residues: Serine/threonine-protein phosphatase 4 regulatory subunit 2-A (420 aa).

Residues 157 to 420 (GNTSAFPDRN…ETADDNMEQD (264 aa)) are disordered. The span at 182 to 195 (SLSSNVATNGLPDS) shows a compositional bias: polar residues. Over residues 196-210 (TESKEQASEQSERTV) the composition is skewed to basic and acidic residues. Positions 212–224 (ESSASEAESHSGA) are enriched in low complexity. Basic and acidic residues predominate over residues 229-250 (HRDDEDATHAETHEAKRLKFDK). A compositionally biased stretch (acidic residues) spans 251–266 (EEEEEEDDEEEDEDGD). Over residues 267-276 (EIKKELDEPH) the composition is skewed to basic and acidic residues. Polar residues predominate over residues 278-296 (PCTSVAESSSDVPQSSTDV). The span at 318–332 (GVDRSTSEDSPDPSH) shows a compositional bias: basic and acidic residues. Acidic residues predominate over residues 346–364 (AEEEEEEESAEAQETEETN). Low complexity predominate over residues 368-394 (SSSSNNSSDEGVSSAETPSASPSSSTE). Residues 411-420 (ETADDNMEQD) show a composition bias toward acidic residues.

The protein belongs to the PPP4R2 family. In terms of assembly, serine/threonine-protein phosphatase 4 (PP4) occurs in different assemblies of the catalytic and one or more regulatory subunits.

Functionally, regulatory subunit of serine/threonine-protein phosphatase 4 (PP4C). This chain is Serine/threonine-protein phosphatase 4 regulatory subunit 2-A (ppp4r2a), found in Danio rerio (Zebrafish).